Here is a 311-residue protein sequence, read N- to C-terminus: Mas-related G-protein coupled receptor member E (311 aa).

Topologically, residues 1 to 25 (MEPREAGQHAGAADGAQEDVAFNLV) are extracellular. The helical transmembrane segment at 26 to 46 (ILSLTEGLGLGGLLGNGAVLW) threads the bilayer. The Cytoplasmic portion of the chain corresponds to 47–63 (LLSSNVYRNPFAIYLLD). A helical transmembrane segment spans residues 64–84 (VACADLIFLGCHMVAIIPDLL). Residues 85–95 (QGRLDFPGFVQ) are Extracellular-facing. A helical membrane pass occupies residues 96 to 116 (TSLATLRFFCYIVGLSLLVAV). The Cytoplasmic portion of the chain corresponds to 117-136 (SVEQCLAALFPAWYSCRRPR). A helical transmembrane segment spans residues 137–157 (HLTTCVCALTWACCLLLHLLL). Residues 158 to 177 (SGACTQFFGEPSRHLCRTLW) are Extracellular-facing. The helical transmembrane segment at 178 to 198 (LVAAVLLAVLCCTMCGASLML) threads the bilayer. Residues 199–216 (LLQVERGPQRPPPRGFPT) lie on the Cytoplasmic side of the membrane. The chain crosses the membrane as a helical span at residues 217-237 (LILLAVLLFLFCGLPFGIYWL). Topologically, residues 238–251 (SRNLLWHIPHYFYH) are extracellular. Residues 252–272 (FSFLTAAVYCAAKPVVYFCLG) form a helical membrane-spanning segment. Over 273 to 311 (SAQGRRLPLRLVLQRALGDEAELGAVRETSRRGLVDIAA) the chain is Cytoplasmic.

Belongs to the G-protein coupled receptor 1 family. Mas subfamily.

It is found in the cell membrane. Orphan receptor. May regulate nociceptor function and/or development, including the sensation or modulation of pain. The sequence is that of Mas-related G-protein coupled receptor member E (MRGPRE) from Macaca fascicularis (Crab-eating macaque).